We begin with the raw amino-acid sequence, 235 residues long: MAQVDLLNVKGEKVGTLEISDFVFNIDPNYDVMWRYVDMQLSNRRAGTASTKTRGEVSGGGRKPWPQKHTGRARHGSIRSPIWRHGGIAHGPKPRDWSKKLNKKMKKLALRSALSVKYRENKLFVLDDLKLERPKTKFLKEILQNLQLSDKKTLIVLPWKDEGYMNVKLSGKNLPNVKVIIADNPNNSKNGEKAVRIDGLNVFDMLKYDYLVLTQDMVSKIEEVLGNEAGKALTE.

Residues 45–75 form a disordered region; that stretch reads RAGTASTKTRGEVSGGGRKPWPQKHTGRARH. Residues 65–75 are compositionally biased toward basic residues; the sequence is WPQKHTGRARH.

This sequence belongs to the universal ribosomal protein uL4 family. In terms of assembly, part of the 50S ribosomal subunit.

One of the primary rRNA binding proteins, this protein initially binds near the 5'-end of the 23S rRNA. It is important during the early stages of 50S assembly. It makes multiple contacts with different domains of the 23S rRNA in the assembled 50S subunit and ribosome. Its function is as follows. Forms part of the polypeptide exit tunnel. This chain is Large ribosomal subunit protein uL4, found in Thermotoga petrophila (strain ATCC BAA-488 / DSM 13995 / JCM 10881 / RKU-1).